A 410-amino-acid polypeptide reads, in one-letter code: Peptidase T (410 aa).

Histidine 77 contacts Zn(2+). Residue aspartate 79 is part of the active site. A Zn(2+)-binding site is contributed by aspartate 140. Residue glutamate 174 is the Proton acceptor of the active site. Zn(2+) is bound by residues glutamate 175, aspartate 197, and histidine 379.

It belongs to the peptidase M20B family. Zn(2+) is required as a cofactor.

It localises to the cytoplasm. The catalysed reaction is Release of the N-terminal residue from a tripeptide.. Its function is as follows. Cleaves the N-terminal amino acid of tripeptides. The sequence is that of Peptidase T from Desulfitobacterium hafniense (strain DSM 10664 / DCB-2).